Reading from the N-terminus, the 124-residue chain is MPTIQQLVRKGRRPKVNKTKSPALRGNPQQRGVCSRVYTTTPKKPNSALRKVARVKLSNGTEVTVYIPGEGHNLQEHSIVLVRGGRVKDLPGVRYKVVRGALDAQAVKDRKQARSRYGAKMEKK.

The tract at residues 1-42 (MPTIQQLVRKGRRPKVNKTKSPALRGNPQQRGVCSRVYTTTP) is disordered. Basic residues predominate over residues 9–18 (RKGRRPKVNK). Residues 27 to 42 (NPQQRGVCSRVYTTTP) are compositionally biased toward polar residues. 3-methylthioaspartic acid is present on Asp-89.

It belongs to the universal ribosomal protein uS12 family. In terms of assembly, part of the 30S ribosomal subunit. Contacts proteins S8 and S17. May interact with IF1 in the 30S initiation complex.

With S4 and S5 plays an important role in translational accuracy. Functionally, interacts with and stabilizes bases of the 16S rRNA that are involved in tRNA selection in the A site and with the mRNA backbone. Located at the interface of the 30S and 50S subunits, it traverses the body of the 30S subunit contacting proteins on the other side and probably holding the rRNA structure together. The combined cluster of proteins S8, S12 and S17 appears to hold together the shoulder and platform of the 30S subunit. The sequence is that of Small ribosomal subunit protein uS12 from Tropheryma whipplei (strain TW08/27) (Whipple's bacillus).